The chain runs to 430 residues: tRNA(Ile)-lysidine synthase (430 aa).

An ATP-binding site is contributed by 27–32 (SGGSDS).

This sequence belongs to the tRNA(Ile)-lysidine synthase family.

The protein resides in the cytoplasm. It carries out the reaction cytidine(34) in tRNA(Ile2) + L-lysine + ATP = lysidine(34) in tRNA(Ile2) + AMP + diphosphate + H(+). Its function is as follows. Ligates lysine onto the cytidine present at position 34 of the AUA codon-specific tRNA(Ile) that contains the anticodon CAU, in an ATP-dependent manner. Cytidine is converted to lysidine, thus changing the amino acid specificity of the tRNA from methionine to isoleucine. This Rickettsia prowazekii (strain Madrid E) protein is tRNA(Ile)-lysidine synthase.